Here is a 560-residue protein sequence, read N- to C-terminus: MLWNWVALVGGIISAVVFSYILQAAYFHELSLLSAVILGIVLIAALALRAFAGKKSVQASYFASTKVKHELRSLIYRKLASMPLNQVNQQSTSSIIQVASEGVEQLEIYFGRYLPQLFYSLLAPLTLFAFLIFFSFKTAIILLICVPLIPMSIIAVNKIAKKLLAKYWSIYVGLGSSFLDNLQGLITLKIYQDDAYKAKAMDKEAEHFRKITMKVLTMQLNSVSLMDLLAYGGAAIGILTALLQFQNAQLSVLGVILFILLSSEFFIPLRLLGSFFHVAMNGKAASDKIFTLLDTPVETQQSAVDFEAKNNVQVEIKDLHFSYSEEKPAITGLNLSILPNQLSVFVGKSGCGKSTLVSLLMGFNKAQQGEILFNGQNALNIDRTSFYQKVSLVSHSSYVFKGTLRENMTMAKIDATDEQIYACLEQVNLAQFVRDNGGLDMQLLSRGANLSGGQIQRLALARALLHNAELYIFDEATSNIDVESEEIILQFIQQFKQQKTIVMISHRLANAVNADCINVLDQGKLIEQGTHKELMEKQGAYAEMFQQQKDLEQIREVANA.

In terms of domain architecture, ABC transmembrane type-1 spans Met-1–Asn-281. 7 consecutive transmembrane segments (helical) span residues Leu-2–Leu-22, Leu-32–Ala-52, Ile-108–Phe-128, Thr-138–Ala-160, Trp-168–Leu-188, Val-223–Leu-243, and Gln-249–Leu-269. The ABC transporter domain maps to Val-314–Gln-547. Position 347–354 (Gly-347–Ser-354) interacts with ATP.

It belongs to the ABC transporter superfamily.

It localises to the cell inner membrane. This is an uncharacterized protein from Haemophilus influenzae (strain ATCC 51907 / DSM 11121 / KW20 / Rd).